The chain runs to 213 residues: General transcription factor 3C polypeptide 6 (213 aa).

Basic and acidic residues predominate over residues 1–11; it reads MAAAADERSPE. Disordered stretches follow at residues 1-20 and 191-213; these read MAAAADERSPEDGEDEEEEE and SGPLIDIPSETEGSVFMETQMLP. The residue at position 2 (Ala-2) is an N-acetylalanine. Ser-9 bears the Phosphoserine mark.

The protein belongs to the TFIIIC subunit 6 family. In terms of assembly, part of the TFIIIC subcomplex TFIIIC2, consisting of six subunits, GTF3C1, GTF3C2, GTF3C3, GTF3C4, GTF3C5 and GTF3C6. Interacts with GTF3C4 and GTF3C5.

It localises to the nucleus. Involved in RNA polymerase III-mediated transcription. Integral, tightly associated component of the DNA-binding TFIIIC2 subcomplex that directly binds tRNA and virus-associated RNA promoters. In Homo sapiens (Human), this protein is General transcription factor 3C polypeptide 6 (GTF3C6).